A 261-amino-acid chain; its full sequence is Ribosome biogenesis protein C3_06160C_A (261 aa).

The segment at 1–38 (MPQNEYIEQHIKKHGRRLDYEERKRKKEAREGHRVAKD) is disordered. Short sequence motifs (nuclear localization signal) lie at residues 11 to 18 (IKKHGRRL) and 51 to 58 (AKKRYAEK). The span at 17–37 (RLDYEERKRKKEAREGHRVAK) shows a compositional bias: basic and acidic residues. Residues 59–85 (VAMKKKIKAHQESKVKGPSTPKAEDGE) are disordered.

Belongs to the eukaryotic ribosomal protein eS8 family. Ribosome biogenesis protein NSA2 subfamily. In terms of assembly, component of the pre-66S ribosomal particle. Interacts with NOP7 and RRP1. Interacts with RSA4 (via WD repeats).

The protein localises to the nucleus. It is found in the nucleolus. In terms of biological role, involved in the biogenesis of the 60S ribosomal subunit. May play a part in the quality control of pre-60S particles. This is Ribosome biogenesis protein C3_06160C_A from Candida albicans (strain SC5314 / ATCC MYA-2876) (Yeast).